The chain runs to 91 residues: Signal peptidase complex subunit 1 (91 aa).

Over 1-28 (MEIFNDLSRKLVFPIDYPSQRRVAKLTD) the chain is Cytoplasmic. A helical transmembrane segment spans residues 29–48 (IILGSGTLVSCLLGFYAGSL). At 49-51 (SLT) the chain is on the lumenal side. The helical transmembrane segment at 52 to 71 (LYAFAAAYGLALLLVVPAYG) threads the bilayer. The Cytoplasmic segment spans residues 72 to 91 (KYRQQKLAWVGSAAATTKDL).

This sequence belongs to the SPCS1 family. In terms of assembly, component of the signal peptidase complex (SPC) composed of a catalytic subunit SEC11 and three accessory subunits SPC1, SPC2 and SPC3. The complex induces a local thinning of the ER membrane which is used to measure the length of the signal peptide (SP) h-region of protein substrates. This ensures the selectivity of the complex towards h-regions shorter than 18-20 amino acids. SPC associates with the translocon complex.

The protein localises to the endoplasmic reticulum membrane. Its function is as follows. Component of the signal peptidase complex (SPC) which catalyzes the cleavage of N-terminal signal sequences from nascent proteins as they are translocated into the lumen of the endoplasmic reticulum. Dispensable for SPC enzymatic activity. This is Signal peptidase complex subunit 1 (SPC1) from Eremothecium gossypii (strain ATCC 10895 / CBS 109.51 / FGSC 9923 / NRRL Y-1056) (Yeast).